The following is a 169-amino-acid chain: Large ribosomal subunit protein uL10 (169 aa).

Belongs to the universal ribosomal protein uL10 family. In terms of assembly, part of the ribosomal stalk of the 50S ribosomal subunit. The N-terminus interacts with L11 and the large rRNA to form the base of the stalk. The C-terminus forms an elongated spine to which L12 dimers bind in a sequential fashion forming a multimeric L10(L12)X complex.

Its function is as follows. Forms part of the ribosomal stalk, playing a central role in the interaction of the ribosome with GTP-bound translation factors. The protein is Large ribosomal subunit protein uL10 of Lactobacillus delbrueckii subsp. bulgaricus (strain ATCC 11842 / DSM 20081 / BCRC 10696 / JCM 1002 / NBRC 13953 / NCIMB 11778 / NCTC 12712 / WDCM 00102 / Lb 14).